The primary structure comprises 123 residues: Putative outer membrane protein CPn_0818/CP_1053/CPj0818/CpB0847 (123 aa).

The first 30 residues, 1–30 (MKRQKRKQSITLIEMMVVITLIGIIGGALA), serve as a signal peptide directing secretion.

It localises to the cell outer membrane. This chain is Putative outer membrane protein CPn_0818/CP_1053/CPj0818/CpB0847, found in Chlamydia pneumoniae (Chlamydophila pneumoniae).